We begin with the raw amino-acid sequence, 595 residues long: Aspartate--tRNA(Asp/Asn) ligase (595 aa).

Position 178 (Glu178) interacts with L-aspartate. The aspartate stretch occupies residues 202–205 (QIFK). Arg224 is an L-aspartate binding site. ATP is bound by residues 224–226 (RDE) and Gln233. His458 contributes to the L-aspartate binding site. Glu488 lines the ATP pocket. Arg495 contributes to the L-aspartate binding site. 540 to 543 (GIDR) is an ATP binding site.

This sequence belongs to the class-II aminoacyl-tRNA synthetase family. Type 1 subfamily. As to quaternary structure, homodimer.

Its subcellular location is the cytoplasm. It carries out the reaction tRNA(Asx) + L-aspartate + ATP = L-aspartyl-tRNA(Asx) + AMP + diphosphate. Its function is as follows. Aspartyl-tRNA synthetase with relaxed tRNA specificity since it is able to aspartylate not only its cognate tRNA(Asp) but also tRNA(Asn). Reaction proceeds in two steps: L-aspartate is first activated by ATP to form Asp-AMP and then transferred to the acceptor end of tRNA(Asp/Asn). This chain is Aspartate--tRNA(Asp/Asn) ligase, found in Acaryochloris marina (strain MBIC 11017).